The chain runs to 320 residues: Lipoyl synthase (320 aa).

Residues 1–11 (MGGMNDLSSTP) are compositionally biased toward polar residues. Residues 1 to 24 (MGGMNDLSSTPAPEGDRPARQRKP) are disordered. Positions 14-24 (EGDRPARQRKP) are enriched in basic and acidic residues. [4Fe-4S] cluster-binding residues include cysteine 53, cysteine 58, cysteine 64, cysteine 79, cysteine 83, cysteine 86, and serine 293. Residues 65–282 (WTKKHATVMI…GAIARAKGFL (218 aa)) form the Radical SAM core domain.

This sequence belongs to the radical SAM superfamily. Lipoyl synthase family. Requires [4Fe-4S] cluster as cofactor.

The protein resides in the cytoplasm. It carries out the reaction [[Fe-S] cluster scaffold protein carrying a second [4Fe-4S](2+) cluster] + N(6)-octanoyl-L-lysyl-[protein] + 2 oxidized [2Fe-2S]-[ferredoxin] + 2 S-adenosyl-L-methionine + 4 H(+) = [[Fe-S] cluster scaffold protein] + N(6)-[(R)-dihydrolipoyl]-L-lysyl-[protein] + 4 Fe(3+) + 2 hydrogen sulfide + 2 5'-deoxyadenosine + 2 L-methionine + 2 reduced [2Fe-2S]-[ferredoxin]. The protein operates within protein modification; protein lipoylation via endogenous pathway; protein N(6)-(lipoyl)lysine from octanoyl-[acyl-carrier-protein]: step 2/2. Its function is as follows. Catalyzes the radical-mediated insertion of two sulfur atoms into the C-6 and C-8 positions of the octanoyl moiety bound to the lipoyl domains of lipoate-dependent enzymes, thereby converting the octanoylated domains into lipoylated derivatives. The sequence is that of Lipoyl synthase from Erythrobacter litoralis (strain HTCC2594).